Reading from the N-terminus, the 414-residue chain is Particulate methane monooxygenase alpha subunit (414 aa).

A signal peptide spans 1-32; sequence MKTIKDRIAKWSAIGLLSAVAATAFYAPSASA. 5 residues coordinate Cu cation: histidine 33, histidine 48, histidine 72, histidine 137, and histidine 139. Residues 33 to 172 form a cupredoxin domain used to construct soluble pmoB (spmoB) region; the sequence is HGEKSQAAFM…MSEFRNPVTT (140 aa). 2 helical membrane passes run 186–206 and 235–255; these read GNTY…IGYW and VAMG…SSAN. Residues 265-414 are cupredoxin domain used to construct soluble pmoB (spmoB); that stretch reads QAGTMRGMKP…IDAPLIPSFM (150 aa).

In terms of assembly, m.capsulatus has two forms of methane monooxygenase, a soluble (sMMO) and a membrane-bound (particulate) type (pMMO). The particulate type is a nonamer composed of three alpha:beta:gamma heterotrimeric protomers assembled into a cylindrical structure; the beta and gamma subunits comprise the bulk of the membrane-spanning regions and the soluble regions are derived primarily from alpha subunits which form two antiparallel beta-barrel-like structures each. This assembly, also called pMMO hydroxylase (pMMO-H), is proposed to associate with methanol dehydrogenase (MDH), also designated as pMMO-R, to form the pMMO-C complex which seems to have greater methane monooxygenase activity. It depends on Cu(2+) as a cofactor.

Its subcellular location is the membrane. The catalysed reaction is methane + a quinol + O2 = methanol + a quinone + H2O. Its function is as follows. Methane monooxygenase is responsible for the initial oxygenation of methane to methanol in methanotrophs. At least in vitro, specific quinols can replace NADH as reductants. This chain is Particulate methane monooxygenase alpha subunit (pmoB1), found in Methylococcus capsulatus (strain ATCC 33009 / NCIMB 11132 / Bath).